The primary structure comprises 85 residues: Putative transmembrane protein ORF28 (85 aa).

The next 2 membrane-spanning stretches (helical) occupy residues 32–52 (IMLL…VQIV) and 59–79 (LLSV…MLGI).

Its subcellular location is the host membrane. The protein is Putative transmembrane protein ORF28 of Haloarcula hispanica (His1V).